Here is a 107-residue protein sequence, read N- to C-terminus: ESAT-6-like protein EsxD (107 aa).

This sequence belongs to the WXG100 family. CFP-10 subfamily.

The protein localises to the secreted. The protein is ESAT-6-like protein EsxD of Mycobacterium tuberculosis (strain ATCC 25618 / H37Rv).